The chain runs to 557 residues: Cytochrome P450 monooxygenase FSL4 (557 aa).

A run of 2 helical transmembrane segments spans residues 6 to 26 (LWLV…IFLL) and 32 to 52 (IVVC…YWTV). Residues N127 and N393 are each glycosylated (N-linked (GlcNAc...) asparagine). C494 provides a ligand contact to heme.

The protein belongs to the cytochrome P450 family. It depends on heme as a cofactor.

The protein localises to the membrane. Its pathway is secondary metabolite biosynthesis. Functionally, cytochrome P450 monooxygenase; part of the gene cluster that mediates the biosynthesis of fusarielins F, G and H, decaketide compounds with 5 methylations and a decaline core that act as mycoestrogens as they stimulate growth of MCF-7 breast cancer cells. The initial compound in the pathway is produced by the reducing polyketide synthase FSL1. FSL1 lacks an active enoyl reductase (ER) domain and biosynthesis of fusarielins relies on the trans-acting enoyl reductase FSL5, before it is released through hydrolysis catalyzed by the thioesterase FSL2. Fusarielins F, G, and H have a C11=C12 cis double bond and is fully reduced between C10 and C11 and between C12 and C13. FSL3 can be involved in the formation of the C11=C12 cis double bond by moving a hypothetical C10=C11 or C12=C13 trans double bond to form prefusarielin. Prefusarielin is oxygenated at C15 and C16 by FSL4, resulting in fusarielin F, which subsequently is epoxidized into fusarielin G by the same enzyme. The final step in the pathway is a reduction of the carboxylic acid moiety to yield fusarielin H via a still undetermined mechanism. The protein is Cytochrome P450 monooxygenase FSL4 of Gibberella zeae (strain ATCC MYA-4620 / CBS 123657 / FGSC 9075 / NRRL 31084 / PH-1) (Wheat head blight fungus).